Here is a 440-residue protein sequence, read N- to C-terminus: Argininosuccinate lyase (440 aa).

The protein belongs to the lyase 1 family. Argininosuccinate lyase subfamily.

Its subcellular location is the cytoplasm. It catalyses the reaction 2-(N(omega)-L-arginino)succinate = fumarate + L-arginine. Its pathway is amino-acid biosynthesis; L-arginine biosynthesis; L-arginine from L-ornithine and carbamoyl phosphate: step 3/3. The polypeptide is Argininosuccinate lyase (Clostridium botulinum (strain Loch Maree / Type A3)).